The sequence spans 200 residues: Holliday junction resolvase RecU (200 aa).

Mg(2+) is bound by residues threonine 82, aspartate 84, glutamate 97, and glutamine 116.

The protein belongs to the RecU family. The cofactor is Mg(2+).

The protein resides in the cytoplasm. It catalyses the reaction Endonucleolytic cleavage at a junction such as a reciprocal single-stranded crossover between two homologous DNA duplexes (Holliday junction).. Endonuclease that resolves Holliday junction intermediates in genetic recombination. Cleaves mobile four-strand junctions by introducing symmetrical nicks in paired strands. Promotes annealing of linear ssDNA with homologous dsDNA. Required for DNA repair, homologous recombination and chromosome segregation. This chain is Holliday junction resolvase RecU, found in Streptococcus sanguinis (strain SK36).